A 382-amino-acid polypeptide reads, in one-letter code: L-arabinitol 4-dehydrogenase (382 aa).

Cysteine 55, histidine 80, glutamate 81, cysteine 110, cysteine 113, cysteine 116, cysteine 124, and glutamate 165 together coordinate Zn(2+). Residues 192–193, aspartate 213, arginine 218, isoleucine 293, and 317–319 contribute to the NAD(+) site; these read PI and QYR.

It belongs to the zinc-containing alcohol dehydrogenase family. As to quaternary structure, homotetramer. Zn(2+) is required as a cofactor.

It carries out the reaction L-arabinitol + NAD(+) = L-xylulose + NADH + H(+). Its pathway is carbohydrate degradation; L-arabinose degradation via L-arabinitol; D-xylulose 5-phosphate from L-arabinose (fungal route): step 2/5. Functionally, catalyzes the NAD-dependent oxidation of L-arabinitol to L-xylulose in the fungal L-arabinose catabolic pathway. L-arabinose catabolism is important for using plant material as a carbon source. Also active on ribitol and xylitol. Not active with NADP as cosubstrate. The sequence is that of L-arabinitol 4-dehydrogenase (ladA) from Aspergillus oryzae (Yellow koji mold).